Consider the following 68-residue polypeptide: Virion membrane protein OPG139 (68 aa).

Residues 1–21 form a helical membrane-spanning segment; sequence MIGILLLIGICVAVTVAILYA. Residues 22–68 are Virion surface-facing; it reads MYNKIKNSQNPSPNVNLPPPETRNTRFVNNLEKDHISSLYNLVKSSV.

Belongs to the orthopoxvirus OPG139 family. In terms of processing, phosphorylated by a OPG054-independent mechanism.

It is found in the virion membrane. Its function is as follows. Essential for the encapsidation of DNA into immature virions (IV) and the subsequent maturation of IV into mature virions (MV). This Homo sapiens (Human) protein is Virion membrane protein OPG139 (OPG139).